The chain runs to 253 residues: Vitamin B12 import ATP-binding protein BtuD (253 aa).

Positions Leu4–Asp236 constitute an ABC transporter domain. Gly32–Ser39 provides a ligand contact to ATP.

This sequence belongs to the ABC transporter superfamily. Vitamin B12 importer (TC 3.A.1.13.1) family. The complex is composed of two ATP-binding proteins (BtuD), two transmembrane proteins (BtuC) and a solute-binding protein (BtuF).

The protein localises to the cell inner membrane. It carries out the reaction an R-cob(III)alamin(out) + ATP + H2O = an R-cob(III)alamin(in) + ADP + phosphate + H(+). Its function is as follows. Part of the ABC transporter complex BtuCDF involved in vitamin B12 import. Responsible for energy coupling to the transport system. In Yersinia pestis, this protein is Vitamin B12 import ATP-binding protein BtuD.